We begin with the raw amino-acid sequence, 382 residues long: Proton extrusion protein PxcA (382 aa).

Helical transmembrane passes span 156–176 (TLIS…VQQI), 257–277 (AIKN…VCII), 305–325 (IILF…QVLL), and 340–360 (FILL…KYWI).

It belongs to the CemA family.

It localises to the cell inner membrane. Required for H(+) efflux immediately after light irradiation to form a rapid H(+) concentration gradient across the thylakoid membranes. Together with PxcL, contributes to transient H(+) uptake following dark to light transition. This chain is Proton extrusion protein PxcA, found in Prochlorococcus marinus (strain MIT 9313).